Here is a 212-residue protein sequence, read N- to C-terminus: Shuttling pre-60S factor ECM1 (212 aa).

Disordered stretches follow at residues 28-48 (KISK…EVKD) and 188-212 (SLAE…DVEE). A Phosphoserine modification is found at serine 188. Residues 191–201 (EDNTVQKTPTN) are compositionally biased toward polar residues.

It belongs to the ECM1 family. As to quaternary structure, associates with the pre-60S ribosomal particle and the nucleopore complex.

It localises to the nucleus. It is found in the nucleolus. The protein resides in the cytoplasm. Functionally, pre-ribosomal factor involved in 60S ribosomal protein subunit export from the nucleus. This Saccharomyces cerevisiae (strain ATCC 204508 / S288c) (Baker's yeast) protein is Shuttling pre-60S factor ECM1 (ECM1).